A 330-amino-acid chain; its full sequence is Glycerol-3-phosphate dehydrogenase [NAD(P)+] (330 aa).

The NADPH site is built by Ser-10, Trp-11, Arg-31, and Lys-105. Sn-glycerol 3-phosphate-binding residues include Lys-105, Gly-135, and Ser-137. Ala-139 serves as a coordination point for NADPH. Positions 190, 243, 253, 254, and 255 each coordinate sn-glycerol 3-phosphate. Lys-190 serves as the catalytic Proton acceptor. Arg-254 is an NADPH binding site. Residues Val-278 and Glu-280 each coordinate NADPH.

The protein belongs to the NAD-dependent glycerol-3-phosphate dehydrogenase family.

Its subcellular location is the cytoplasm. It carries out the reaction sn-glycerol 3-phosphate + NAD(+) = dihydroxyacetone phosphate + NADH + H(+). It catalyses the reaction sn-glycerol 3-phosphate + NADP(+) = dihydroxyacetone phosphate + NADPH + H(+). It participates in membrane lipid metabolism; glycerophospholipid metabolism. In terms of biological role, catalyzes the reduction of the glycolytic intermediate dihydroxyacetone phosphate (DHAP) to sn-glycerol 3-phosphate (G3P), the key precursor for phospholipid synthesis. The polypeptide is Glycerol-3-phosphate dehydrogenase [NAD(P)+] (Nitratidesulfovibrio vulgaris (strain ATCC 29579 / DSM 644 / CCUG 34227 / NCIMB 8303 / VKM B-1760 / Hildenborough) (Desulfovibrio vulgaris)).